Consider the following 371-residue polypeptide: MSL complex subunit 3B (371 aa).

Disordered regions lie at residues 1–47 (MATL…DERA) and 160–230 (EERA…PQAK). Over residues 8–47 (PKDDGEGKDEGGSDRGDGDSKPKGKKEVEPHTRREADERA) the composition is skewed to basic and acidic residues. One can recognise an MRG domain in the interval 44 to 367 (DERAMRIPIP…CEAHYSSKNP (324 aa)). Residues 183-193 (SESQAVAGPAA) show a composition bias toward low complexity. Basic residues predominate over residues 206-216 (APRRSTRHSTH).

It localises to the nucleus. In terms of biological role, probable non-catalytic component of the MSL histone acetyltransferase complex, a multiprotein complex that mediates the majority of histone H4 acetylation at 'Lys-16' (H4K16ac), an epigenetic mark that prevents chromatin compaction. The sequence is that of MSL complex subunit 3B from Mus musculus (Mouse).